A 397-amino-acid polypeptide reads, in one-letter code: Keratinocyte differentiation factor 1 (397 aa).

Residues 1–16 (MPRPGQPRPSSGPPRL) are compositionally biased toward pro residues. Disordered regions lie at residues 1 to 67 (MPRP…SAEP), 124 to 158 (EAAWAKEHNGVPPSPDRAPPSRRDGQKLKTSMGSS), and 191 to 214 (PLADPPPTRHSLPSTFTSSPRGSE). Over residues 44–55 (RPDPKDPGHHGP) the composition is skewed to basic and acidic residues. Polar residues predominate over residues 201–211 (SLPSTFTSSPR). Phosphoserine is present on serine 218. Disordered stretches follow at residues 304–339 (ISTRKSRSRPQTSEGRSARSTAPAAAPDSGHETMVG) and 361–392 (ARKLRPYGAPGYPASQDSSFQGTDTDSSGAPL). Low complexity predominate over residues 321 to 330 (ARSTAPAAAP). Polar residues predominate over residues 375–388 (SQDSSFQGTDTDSS).

It localises to the cytoplasm. The protein localises to the cell junction. In terms of biological role, plays a role in the regulation of the epidermis formation during early development. Required both as an inhibitor of basal cell proliferation and a promoter of differentiation of basal progenitor cell progeny. The chain is Keratinocyte differentiation factor 1 (Kdf1) from Rattus norvegicus (Rat).